Reading from the N-terminus, the 313-residue chain is D-alanine--D-alanine ligase (313 aa).

One can recognise an ATP-grasp domain in the interval 108–308; that stretch reads KLVWQQTGVP…YSELVVKVLS (201 aa). 138-193 serves as a coordination point for ATP; that stretch reads VAKLGLPLFVKPASEGSSVAVLKVKTADALPAALAEAATHDKIVIVEKSIEGGGEY. Residues aspartate 262, glutamate 275, and asparagine 277 each contribute to the Mg(2+) site.

It belongs to the D-alanine--D-alanine ligase family. Mg(2+) serves as cofactor. Mn(2+) is required as a cofactor.

The protein resides in the cytoplasm. The catalysed reaction is 2 D-alanine + ATP = D-alanyl-D-alanine + ADP + phosphate + H(+). It functions in the pathway cell wall biogenesis; peptidoglycan biosynthesis. Functionally, cell wall formation. The chain is D-alanine--D-alanine ligase from Burkholderia multivorans (strain ATCC 17616 / 249).